A 236-amino-acid chain; its full sequence is 2,3,4,5-tetrahydropyridine-2,6-dicarboxylate N-acetyltransferase (236 aa).

This sequence belongs to the transferase hexapeptide repeat family. DapH subfamily.

It carries out the reaction (S)-2,3,4,5-tetrahydrodipicolinate + acetyl-CoA + H2O = L-2-acetamido-6-oxoheptanedioate + CoA. The protein operates within amino-acid biosynthesis; L-lysine biosynthesis via DAP pathway; LL-2,6-diaminopimelate from (S)-tetrahydrodipicolinate (acetylase route): step 1/3. Catalyzes the transfer of an acetyl group from acetyl-CoA to tetrahydrodipicolinate. This Bacillus subtilis (strain 168) protein is 2,3,4,5-tetrahydropyridine-2,6-dicarboxylate N-acetyltransferase.